The primary structure comprises 69 residues: Purkinje cell protein 4-like protein 1 (69 aa).

Residues 1-15 (MSELNTKTSPATNQA) are compositionally biased toward polar residues. Residues 1–47 (MSELNTKTSPATNQAPGPEEKGKAGSAKKTEDEEEEIDIDLTAPETE) form a disordered region. Phosphothreonine is present on threonine 8. Over residues 18–31 (PEEKGKAGSAKKTE) the composition is skewed to basic and acidic residues. An IQ domain is found at 46–69 (TEKAALAIQGKFRRFQKRKKDPSS).

Belongs to the PCP4 family.

The chain is Purkinje cell protein 4-like protein 1 (PCP4L1) from Bos taurus (Bovine).